We begin with the raw amino-acid sequence, 138 residues long: Gap junction alpha-4 protein (138 aa).

Residues 1-16 (DWGFLEKLLDQVQEHS) are Cytoplasmic-facing. Residues 17 to 39 (TVVGKIWLTVLFIFRILILGLAG) traverse the membrane as a helical segment. Over 40–74 (ESVWGDEQSDFECNTAQPGCTNVCYDQAFPISHIP) the chain is Extracellular. The chain crosses the membrane as a helical span at residues 75–97 (YWVLQFLFVSTPTLVYLGHVIYL). The Cytoplasmic portion of the chain corresponds to 98–138 (SRREERLRQKEGELRALPDKDPRVERALAGIERQMAKISVA).

Belongs to the connexin family. Alpha-type (group II) subfamily. A connexon is composed of a hexamer of connexins.

It is found in the cell membrane. Its subcellular location is the cell junction. The protein resides in the gap junction. Functionally, one gap junction consists of a cluster of closely packed pairs of transmembrane channels, the connexons, through which materials of low MW diffuse from one cell to a neighboring cell. The sequence is that of Gap junction alpha-4 protein (GJA4) from Sus scrofa (Pig).